Reading from the N-terminus, the 145-residue chain is Large ribosomal subunit protein uL15 (145 aa).

A disordered region spans residues 23-51; it reads IGSGWGKTGGRGHKGQKSRSGGKIRKSFE. The segment covering 32-47 has biased composition (basic residues); the sequence is GRGHKGQKSRSGGKIR.

It belongs to the universal ribosomal protein uL15 family. As to quaternary structure, part of the 50S ribosomal subunit.

Functionally, binds to the 23S rRNA. The polypeptide is Large ribosomal subunit protein uL15 (Buchnera aphidicola subsp. Cinara cedri (strain Cc)).